The following is a 132-amino-acid chain: Small ribosomal subunit protein uS8 (132 aa).

This sequence belongs to the universal ribosomal protein uS8 family. As to quaternary structure, part of the 30S ribosomal subunit. Contacts proteins S5 and S12.

Its function is as follows. One of the primary rRNA binding proteins, it binds directly to 16S rRNA central domain where it helps coordinate assembly of the platform of the 30S subunit. This Brevibacillus brevis (strain 47 / JCM 6285 / NBRC 100599) protein is Small ribosomal subunit protein uS8.